The following is a 600-amino-acid chain: Proline--tRNA ligase (600 aa).

Belongs to the class-II aminoacyl-tRNA synthetase family. ProS type 1 subfamily. Homodimer.

Its subcellular location is the cytoplasm. It carries out the reaction tRNA(Pro) + L-proline + ATP = L-prolyl-tRNA(Pro) + AMP + diphosphate. In terms of biological role, catalyzes the attachment of proline to tRNA(Pro) in a two-step reaction: proline is first activated by ATP to form Pro-AMP and then transferred to the acceptor end of tRNA(Pro). As ProRS can inadvertently accommodate and process non-cognate amino acids such as alanine and cysteine, to avoid such errors it has two additional distinct editing activities against alanine. One activity is designated as 'pretransfer' editing and involves the tRNA(Pro)-independent hydrolysis of activated Ala-AMP. The other activity is designated 'posttransfer' editing and involves deacylation of mischarged Ala-tRNA(Pro). The misacylated Cys-tRNA(Pro) is not edited by ProRS. The protein is Proline--tRNA ligase of Prochlorococcus marinus (strain MIT 9211).